The following is a 576-amino-acid chain: Arginine--tRNA ligase (576 aa).

A 'HIGH' region motif is present at residues 126–136 (ANPTGPMHIGH).

The protein belongs to the class-I aminoacyl-tRNA synthetase family. As to quaternary structure, monomer.

The protein resides in the cytoplasm. The catalysed reaction is tRNA(Arg) + L-arginine + ATP = L-arginyl-tRNA(Arg) + AMP + diphosphate. The chain is Arginine--tRNA ligase from Rickettsia felis (strain ATCC VR-1525 / URRWXCal2) (Rickettsia azadi).